An 87-amino-acid chain; its full sequence is Small ribosomal subunit protein bS16 (87 aa).

It belongs to the bacterial ribosomal protein bS16 family.

The chain is Small ribosomal subunit protein bS16 from Aster yellows witches'-broom phytoplasma (strain AYWB).